A 515-amino-acid chain; its full sequence is Probable NADPH:adrenodoxin oxidoreductase, mitochondrial (515 aa).

A52, E73, L81, and I119 together coordinate FAD. Residues 191-194 (QGNV), 236-237 (RR), and E248 contribute to the NADP(+) site. FAD-binding positions include W419 and 426 to 428 (GSI). G426 serves as a coordination point for NADP(+).

The protein belongs to the ferredoxin--NADP reductase type 1 family. FAD is required as a cofactor.

The protein resides in the mitochondrion inner membrane. It carries out the reaction 2 reduced [adrenodoxin] + NADP(+) + H(+) = 2 oxidized [adrenodoxin] + NADPH. The chain is Probable NADPH:adrenodoxin oxidoreductase, mitochondrial (fdxr) from Dictyostelium discoideum (Social amoeba).